Reading from the N-terminus, the 206-residue chain is LexA repressor (206 aa).

The segment at residues Arg28–Lys48 is a DNA-binding region (H-T-H motif). Active-site for autocatalytic cleavage activity residues include Ser123 and Lys160.

It belongs to the peptidase S24 family. Homodimer.

The enzyme catalyses Hydrolysis of Ala-|-Gly bond in repressor LexA.. Its function is as follows. Represses a number of genes involved in the response to DNA damage (SOS response), including recA and lexA. In the presence of single-stranded DNA, RecA interacts with LexA causing an autocatalytic cleavage which disrupts the DNA-binding part of LexA, leading to derepression of the SOS regulon and eventually DNA repair. This Shewanella pealeana (strain ATCC 700345 / ANG-SQ1) protein is LexA repressor.